We begin with the raw amino-acid sequence, 331 residues long: Ferrochelatase (331 aa).

Residues His187 and Glu286 each contribute to the Fe cation site.

This sequence belongs to the ferrochelatase family.

Its subcellular location is the cytoplasm. It carries out the reaction heme b + 2 H(+) = protoporphyrin IX + Fe(2+). It functions in the pathway porphyrin-containing compound metabolism; protoheme biosynthesis; protoheme from protoporphyrin-IX: step 1/1. In terms of biological role, catalyzes the ferrous insertion into protoporphyrin IX. The polypeptide is Ferrochelatase (Legionella pneumophila (strain Lens)).